We begin with the raw amino-acid sequence, 529 residues long: Delayed-rectifier potassium channel regulatory subunit KCNS1 (529 aa).

The Cytoplasmic portion of the chain corresponds to 1 to 217 (MLMLLVRGTR…LTMENPGYSL (217 aa)). The chain crosses the membrane as a helical span at residues 218–239 (PSKLFSCVSISVVLASIAAMCI). Over 240 to 270 (HSLPEYQAREAAAAVAAVAAGRSAEGVRDDP) the chain is Extracellular. Residues 271–293 (VLRRLEYFCIAWFSFEVSSRLLL) traverse the membrane as a helical segment. Topologically, residues 294–304 (APSTRNFFCHP) are cytoplasmic. Residues 305 to 322 (LNLIDIVSVLPFYLTLLA) form a helical membrane-spanning segment. Over 323–340 (GAALGDHGGTGGKEFGHL) the chain is Extracellular. Residues 341-361 (GKVVQVFRLMRIFRVLKLARH) form a helical; Voltage-sensor membrane-spanning segment. Over 362–376 (STGLRSLGATLKHSY) the chain is Cytoplasmic. The chain crosses the membrane as a helical span at residues 377–398 (REVGILLLYLAVGVSVFSGVAY). Over 399-411 (TAEKEEHVGFDTI) the chain is Extracellular. The segment at residues 412–423 (PACWWWGTVSMT) is an intramembrane region (helical). Residues 424-429 (TVGYGD) carry the Selectivity filter motif. An intramembrane segment occupies 424 to 431 (TVGYGDVV). Topologically, residues 432 to 438 (PVTVAGK) are extracellular. A helical membrane pass occupies residues 439–467 (LAASGCILGGILVVALPITIIFNKFSHFY). The Cytoplasmic segment spans residues 468 to 529 (RRQKALEAAV…PSEPPHSQMY (62 aa)). The tract at residues 494 to 529 (GVSEASLETSRETSQEGRSADLETQVPSEPPHSQMY) is disordered. A compositionally biased stretch (basic and acidic residues) spans 502-514 (TSRETSQEGRSAD).

Belongs to the potassium channel family. S (TC 1.A.1.2) subfamily. Kv9.1/KCNS1 sub-subfamily. As to quaternary structure, heterotetramer with KCNB1. Heterotetramer with KCNB2. Does not form homomultimers.

The protein resides in the cell membrane. Its function is as follows. Potassium channel regulatory subunit that modulate the delayed rectifier voltage-gated potassium channel activity of KCNB1 and KCNB2 by altering their kinetics, expression levels, and shifting the half-inactivation potential to more polarized values. While it does not form functional channels on its own, it can form functional heterotetrameric channels with KCNB1 and KCNB2. Each regulatory subunit has unique regulatory properties that can lead to extensive inhibition, significant changes in kinetics, and/or substantial shifts in the voltage dependencies of the inactivation process. In Aotus nancymaae (Ma's night monkey), this protein is Delayed-rectifier potassium channel regulatory subunit KCNS1.